The sequence spans 76 residues: U1-cyrtautoxin-As1b (76 aa).

4 disulfide bridges follow: Cys-23-Cys-37, Cys-30-Cys-51, Cys-36-Cys-66, and Cys-69-Cys-76.

The protein belongs to the neurotoxin 21 family. As to expression, expressed by the venom gland.

The protein resides in the secreted. In terms of biological role, neurotoxin with probable ion channel impairing activity. Is both paralytic and lethal, when injected into lepidopteran larvae. In Apomastus schlingeri (Trap-door spider), this protein is U1-cyrtautoxin-As1b.